Here is a 290-residue protein sequence, read N- to C-terminus: MAYLGDPKQTIEVLNRYRFIFQKKFGQNFLIDTHVLEKIIRSAEITKDDLVLEIGPGIGTMTQYLCENAREVVAVEIDKNLIPILEQDTLSSYDNVTIINEDILKVDINQIVKEKNGGKPIKVVANLPYYITTPIIMGLFEAHVPIDNITVMVQKEVADRMQSGPGSKDYGALSLAVQYYADPYIVANVPPNCFMPRPNVGSAVIRLTLHQDAPVKVKNENLLFKLIRASFNQRRKTLANGLNNSPEISLPKEMISEAIEELGVVATIRGEALTLEQFAKLADIIDEKMK.

Positions 28, 30, 55, 76, 102, and 126 each coordinate S-adenosyl-L-methionine.

The protein belongs to the class I-like SAM-binding methyltransferase superfamily. rRNA adenine N(6)-methyltransferase family. RsmA subfamily.

The protein localises to the cytoplasm. The catalysed reaction is adenosine(1518)/adenosine(1519) in 16S rRNA + 4 S-adenosyl-L-methionine = N(6)-dimethyladenosine(1518)/N(6)-dimethyladenosine(1519) in 16S rRNA + 4 S-adenosyl-L-homocysteine + 4 H(+). Specifically dimethylates two adjacent adenosines (A1518 and A1519) in the loop of a conserved hairpin near the 3'-end of 16S rRNA in the 30S particle. May play a critical role in biogenesis of 30S subunits. This chain is Ribosomal RNA small subunit methyltransferase A, found in Lachnoclostridium phytofermentans (strain ATCC 700394 / DSM 18823 / ISDg) (Clostridium phytofermentans).